The primary structure comprises 200 residues: Probable E3 ubiquitin-protein ligase ATL45 (200 aa).

The chain crosses the membrane as a helical span at residues 26 to 46; sequence MVVILSALLCALVCVAGLAAV. Residues 113–155 form an RING-type; atypical zinc finger; sequence CAICITEFSEGEEIRILPLCSHAFHVACIDKWLTSRSSCPSCR.

The protein belongs to the RING-type zinc finger family. ATL subfamily. In terms of assembly, interacts with BIK1.

It localises to the membrane. It catalyses the reaction S-ubiquitinyl-[E2 ubiquitin-conjugating enzyme]-L-cysteine + [acceptor protein]-L-lysine = [E2 ubiquitin-conjugating enzyme]-L-cysteine + N(6)-ubiquitinyl-[acceptor protein]-L-lysine.. The protein operates within protein modification; protein ubiquitination. In terms of biological role, E3 ubiquitin-protein ligase that possess E3 ubiquitin ligase activity in vitro and mediates protein monoubiquitination. Triggers the monoubiquitination of phosphorylated BIK1 in response to pathogen-associated molecular pattern (PAMP) detection. May be involved in the early steps of the plant defense signaling pathway. The polypeptide is Probable E3 ubiquitin-protein ligase ATL45 (Arabidopsis thaliana (Mouse-ear cress)).